Here is a 36-residue protein sequence, read N- to C-terminus: uncharacterized protein (36 aa).

This is an uncharacterized protein from Spiroplasma melliferum (SpV1).